Reading from the N-terminus, the 141-residue chain is Putative antirestriction protein YubI (141 aa).

Belongs to the antirestriction protein family.

The chain is Putative antirestriction protein YubI (yubI) from Escherichia coli (strain K12).